The following is a 648-amino-acid chain: Threonine--tRNA ligase (648 aa).

Residues Met-1 to Thr-62 enclose the TGS domain. A catalytic region spans residues Asp-243–Pro-536. Residues Cys-336, His-387, and His-513 each coordinate Zn(2+).

It belongs to the class-II aminoacyl-tRNA synthetase family. Homodimer. The cofactor is Zn(2+).

The protein localises to the cytoplasm. The enzyme catalyses tRNA(Thr) + L-threonine + ATP = L-threonyl-tRNA(Thr) + AMP + diphosphate + H(+). Catalyzes the attachment of threonine to tRNA(Thr) in a two-step reaction: L-threonine is first activated by ATP to form Thr-AMP and then transferred to the acceptor end of tRNA(Thr). Also edits incorrectly charged L-seryl-tRNA(Thr). The polypeptide is Threonine--tRNA ligase (Magnetococcus marinus (strain ATCC BAA-1437 / JCM 17883 / MC-1)).